The primary structure comprises 213 residues: Orotidine 5'-phosphate decarboxylase (213 aa).

Substrate is bound by residues Asp9, Lys31, 59–68 (DFKVADIPAT), Ser115, 166–176 (PGVGAQGGKIE), Gly191, and Arg192. The active-site Proton donor is the Lys61.

It belongs to the OMP decarboxylase family. Type 1 subfamily. Homodimer.

The catalysed reaction is orotidine 5'-phosphate + H(+) = UMP + CO2. Its pathway is pyrimidine metabolism; UMP biosynthesis via de novo pathway; UMP from orotate: step 2/2. Catalyzes the decarboxylation of orotidine 5'-monophosphate (OMP) to uridine 5'-monophosphate (UMP). This Methanocaldococcus jannaschii (strain ATCC 43067 / DSM 2661 / JAL-1 / JCM 10045 / NBRC 100440) (Methanococcus jannaschii) protein is Orotidine 5'-phosphate decarboxylase.